The chain runs to 395 residues: MGATALRKVSIFGATGSIGQNTIDLIARDPDAYDVVALSGGANIAQLAADARRLRADVAVTAFPERLHDLRAALAGSGVEAAAGPAALVEAGARPADWVMSAIVGAAGLAPGLAALKQGATLALANKETLVCAGALVLETARRHGARLLPVDSEHSAVFQALVGEDMEAVERIVITASGGAFRDWPLERLASATAEQAAQHPNWDMGQRITIDSASMFNKALEVIETREFFGIDPDRIEVIVHPESMVHALVGFRDGALMAHLGAPDMRHAIGYALHWPERRDLPVARLDLAALGQLNFRAPDDARYPALRLARWVMARGGLSGAVFNAAKERALDHFIAGRIGFLDMAGLVEAVLDRFEADPGLIDAPMTLDTVTQTDHLARQRVDAAMAKRAG.

The NADPH site is built by threonine 15, glycine 16, serine 17, isoleucine 18, glycine 41, asparagine 43, and asparagine 126. Lysine 127 serves as a coordination point for 1-deoxy-D-xylulose 5-phosphate. Residue glutamate 128 participates in NADPH binding. Aspartate 152 provides a ligand contact to Mn(2+). Serine 153, glutamate 154, serine 178, and histidine 201 together coordinate 1-deoxy-D-xylulose 5-phosphate. Glutamate 154 serves as a coordination point for Mn(2+). NADPH is bound at residue glycine 207. 4 residues coordinate 1-deoxy-D-xylulose 5-phosphate: serine 214, asparagine 219, lysine 220, and glutamate 223. Glutamate 223 provides a ligand contact to Mn(2+).

The protein belongs to the DXR family. The cofactor is Mg(2+). It depends on Mn(2+) as a cofactor.

It catalyses the reaction 2-C-methyl-D-erythritol 4-phosphate + NADP(+) = 1-deoxy-D-xylulose 5-phosphate + NADPH + H(+). It functions in the pathway isoprenoid biosynthesis; isopentenyl diphosphate biosynthesis via DXP pathway; isopentenyl diphosphate from 1-deoxy-D-xylulose 5-phosphate: step 1/6. In terms of biological role, catalyzes the NADPH-dependent rearrangement and reduction of 1-deoxy-D-xylulose-5-phosphate (DXP) to 2-C-methyl-D-erythritol 4-phosphate (MEP). This Ruegeria pomeroyi (strain ATCC 700808 / DSM 15171 / DSS-3) (Silicibacter pomeroyi) protein is 1-deoxy-D-xylulose 5-phosphate reductoisomerase.